The following is a 270-amino-acid chain: Molybdenum storage protein subunit beta (270 aa).

In terms of assembly, octamer consisting of 4 alpha and 4 beta chains.

It is found in the cytoplasm. In terms of biological role, intracellular storage of molybdenum. Binds polyoxomolybdates. Can bind at least 90 molybdenum atoms per protein molecule. This chain is Molybdenum storage protein subunit beta, found in Azotobacter vinelandii (strain DJ / ATCC BAA-1303).